The following is a 449-amino-acid chain: Uric acid permease PucJ (449 aa).

13 consecutive transmembrane segments (helical) span residues 11 to 31, 41 to 61, 67 to 87, 91 to 111, 119 to 139, 158 to 178, 191 to 211, 229 to 249, 277 to 297, 313 to 333, 334 to 354, 372 to 392, and 401 to 421; these read LSLQ…LLVG, LSYL…LQTL, GIGL…MIAI, YGIH…FLFA, VLFP…SLVP, EYGS…ILVL, VLIG…VSFS, APAF…VIIV, AEGI…NTFA, IVVT…IAAL, ASAV…GMVI, LLTI…PGIF, and ILVS…NLFF.

The protein belongs to the nucleobase:cation symporter-2 (NCS2) (TC 2.A.40) family.

It is found in the cell membrane. Its function is as follows. Uptake of uric acid. This is Uric acid permease PucJ (pucJ) from Bacillus subtilis (strain 168).